Reading from the N-terminus, the 387-residue chain is Dual specificity protein phosphatase MPK-4 (387 aa).

The segment covering Met1–Ser15 has biased composition (polar residues). Residues Met1 to Leu27 are disordered. The Tyrosine-protein phosphatase domain maps to Gly35–Lys182. Residue Cys126 is the Phosphocysteine intermediate of the active site. Residues Leu248 to Glu267 are disordered.

It belongs to the protein-tyrosine phosphatase family. Non-receptor class dual specificity subfamily. Interacts (via tyrosine-protein phosphatase domain) with bsk/JNK; the interaction dephosphorylates bsk.

It is found in the nucleus. Its subcellular location is the cytoplasm. It catalyses the reaction O-phospho-L-tyrosyl-[protein] + H2O = L-tyrosyl-[protein] + phosphate. It carries out the reaction O-phospho-L-seryl-[protein] + H2O = L-seryl-[protein] + phosphate. The enzyme catalyses O-phospho-L-threonyl-[protein] + H2O = L-threonyl-[protein] + phosphate. With respect to regulation, inhibited by the tyrosine phosphatase inhibitor sodium vanadate. Functionally, dual specificity phosphatase; can dephosphorylate both phosphotyrosine and phosphoserine or phosphothreonine residues. May suppress bsk/JNK activation during the immune response. This Drosophila melanogaster (Fruit fly) protein is Dual specificity protein phosphatase MPK-4.